Reading from the N-terminus, the 386-residue chain is Bifunctional enzyme IspD/IspF (386 aa).

The 2-C-methyl-D-erythritol 4-phosphate cytidylyltransferase stretch occupies residues 1–230 (MNSVPSLPGQ…LEEQSMSVIP (230 aa)). Residues 231-386 (RTGMGFDVHR…AQAVATVVSG (156 aa)) are 2-C-methyl-D-erythritol 2,4-cyclodiphosphate synthase. A divalent metal cation-binding residues include aspartate 237 and histidine 239. 4-CDP-2-C-methyl-D-erythritol 2-phosphate contacts are provided by residues 237–239 (DVH) and 263–264 (HS). Histidine 271 is an a divalent metal cation binding site. 4-CDP-2-C-methyl-D-erythritol 2-phosphate contacts are provided by residues 285-287 (DIG), 361-364 (TTTE), and arginine 371.

The protein in the N-terminal section; belongs to the IspD/TarI cytidylyltransferase family. IspD subfamily. In the C-terminal section; belongs to the IspF family. A divalent metal cation serves as cofactor.

The catalysed reaction is 2-C-methyl-D-erythritol 4-phosphate + CTP + H(+) = 4-CDP-2-C-methyl-D-erythritol + diphosphate. It carries out the reaction 4-CDP-2-C-methyl-D-erythritol 2-phosphate = 2-C-methyl-D-erythritol 2,4-cyclic diphosphate + CMP. It participates in isoprenoid biosynthesis; isopentenyl diphosphate biosynthesis via DXP pathway; isopentenyl diphosphate from 1-deoxy-D-xylulose 5-phosphate: step 2/6. It functions in the pathway isoprenoid biosynthesis; isopentenyl diphosphate biosynthesis via DXP pathway; isopentenyl diphosphate from 1-deoxy-D-xylulose 5-phosphate: step 4/6. Its function is as follows. Bifunctional enzyme that catalyzes the formation of 4-diphosphocytidyl-2-C-methyl-D-erythritol from CTP and 2-C-methyl-D-erythritol 4-phosphate (MEP) (IspD), and catalyzes the conversion of 4-diphosphocytidyl-2-C-methyl-D-erythritol 2-phosphate (CDP-ME2P) to 2-C-methyl-D-erythritol 2,4-cyclodiphosphate (ME-CPP) with a corresponding release of cytidine 5-monophosphate (CMP) (IspF). In Novosphingobium aromaticivorans (strain ATCC 700278 / DSM 12444 / CCUG 56034 / CIP 105152 / NBRC 16084 / F199), this protein is Bifunctional enzyme IspD/IspF.